The sequence spans 86 residues: Small ribosomal subunit protein bS16 (86 aa).

It belongs to the bacterial ribosomal protein bS16 family.

This chain is Small ribosomal subunit protein bS16, found in Methylibium petroleiphilum (strain ATCC BAA-1232 / LMG 22953 / PM1).